The chain runs to 226 residues: Ribose-5-phosphate isomerase A (226 aa).

Residues Thr28 to Thr31, Asp83 to Asp86, and Lys97 to Gly100 contribute to the substrate site. Catalysis depends on Glu106, which acts as the Proton acceptor. Lys124 is a binding site for substrate.

It belongs to the ribose 5-phosphate isomerase family. Homotetramer.

The enzyme catalyses aldehydo-D-ribose 5-phosphate = D-ribulose 5-phosphate. It participates in carbohydrate biosynthesis; D-ribose 5-phosphate biosynthesis. In terms of biological role, catalyzes the reversible conversion of ribose-5-phosphate to ribulose 5-phosphate. This Methanocaldococcus jannaschii (strain ATCC 43067 / DSM 2661 / JAL-1 / JCM 10045 / NBRC 100440) (Methanococcus jannaschii) protein is Ribose-5-phosphate isomerase A.